A 66-amino-acid chain; its full sequence is Photosystem II reaction center protein J (66 aa).

The segment at 1–27 (MSGKKSGLPDGRVPDRNPDGTPAVPWK) is disordered. Residues 37-57 (LWLVATAGGMAVMFVVGLFFY) traverse the membrane as a helical segment.

The protein belongs to the PsbJ family. PSII is composed of 1 copy each of membrane proteins PsbA, PsbB, PsbC, PsbD, PsbE, PsbF, PsbH, PsbI, PsbJ, PsbK, PsbL, PsbM, PsbT, PsbX, PsbY, PsbZ, Psb30/Ycf12, peripheral proteins PsbO, CyanoQ (PsbQ), PsbU, PsbV and a large number of cofactors. It forms dimeric complexes.

It localises to the cellular thylakoid membrane. Functionally, one of the components of the core complex of photosystem II (PSII). PSII is a light-driven water:plastoquinone oxidoreductase that uses light energy to abstract electrons from H(2)O, generating O(2) and a proton gradient subsequently used for ATP formation. It consists of a core antenna complex that captures photons, and an electron transfer chain that converts photonic excitation into a charge separation. The sequence is that of Photosystem II reaction center protein J from Synechococcus sp. (strain RCC307).